The sequence spans 366 residues: Alanine racemase (366 aa).

Lysine 35 (proton acceptor; specific for D-alanine) is an active-site residue. Lysine 35 bears the N6-(pyridoxal phosphate)lysine mark. Position 130 (arginine 130) interacts with substrate. The active-site Proton acceptor; specific for L-alanine is tyrosine 254. Methionine 302 is a substrate binding site.

The protein belongs to the alanine racemase family. Requires pyridoxal 5'-phosphate as cofactor.

The catalysed reaction is L-alanine = D-alanine. Its pathway is amino-acid biosynthesis; D-alanine biosynthesis; D-alanine from L-alanine: step 1/1. Catalyzes the interconversion of L-alanine and D-alanine. May also act on other amino acids. The polypeptide is Alanine racemase (alr) (Variovorax paradoxus (strain S110)).